A 276-amino-acid polypeptide reads, in one-letter code: CDP-diacylglycerol--serine O-phosphatidyltransferase (276 aa).

Residues 1-21 (MVESDEDFAPQEFPHTDTDVI) are disordered. Phosphoserine occurs at positions 4, 34, 42, 46, 47, and 50. A run of 4 helical transmembrane segments spans residues 82-102 (MADYITMLNGFSGFYSIVSCL), 163-183 (IAFAIGFQTTFDVMILSFFVL), 210-230 (YFEGLPMPTTLALVLGMAYCV), and 248-268 (QILEFHPIILVFFIHGCGMIS).

This sequence belongs to the CDP-alcohol phosphatidyltransferase class-I family. Mn(2+) serves as cofactor. The cofactor is Mg(2+).

The protein localises to the microsome membrane. It is found in the endoplasmic reticulum membrane. It localises to the mitochondrion outer membrane. It catalyses the reaction a CDP-1,2-diacyl-sn-glycerol + L-serine = a 1,2-diacyl-sn-glycero-3-phospho-L-serine + CMP + H(+). The protein operates within phospholipid metabolism; phosphatidylethanolamine biosynthesis; phosphatidylethanolamine from CDP-diacylglycerol: step 1/2. Its function is as follows. Catalyzes the synthesis of phosphatidylserine (PtdSer). This chain is CDP-diacylglycerol--serine O-phosphatidyltransferase (CHO1), found in Saccharomyces cerevisiae (strain ATCC 204508 / S288c) (Baker's yeast).